A 268-amino-acid chain; its full sequence is 4-hydroxy-tetrahydrodipicolinate reductase (268 aa).

Residues 10 to 15 (GASGRM) and D36 each bind NAD(+). NADP(+) is bound at residue R37. NAD(+)-binding positions include 99-101 (GTT) and 123-126 (SANM). H156 functions as the Proton donor/acceptor in the catalytic mechanism. Residue H157 participates in (S)-2,3,4,5-tetrahydrodipicolinate binding. Catalysis depends on K160, which acts as the Proton donor. 166 to 167 (GT) is a (S)-2,3,4,5-tetrahydrodipicolinate binding site.

Belongs to the DapB family.

The protein localises to the cytoplasm. It carries out the reaction (S)-2,3,4,5-tetrahydrodipicolinate + NAD(+) + H2O = (2S,4S)-4-hydroxy-2,3,4,5-tetrahydrodipicolinate + NADH + H(+). The catalysed reaction is (S)-2,3,4,5-tetrahydrodipicolinate + NADP(+) + H2O = (2S,4S)-4-hydroxy-2,3,4,5-tetrahydrodipicolinate + NADPH + H(+). It participates in amino-acid biosynthesis; L-lysine biosynthesis via DAP pathway; (S)-tetrahydrodipicolinate from L-aspartate: step 4/4. Its function is as follows. Catalyzes the conversion of 4-hydroxy-tetrahydrodipicolinate (HTPA) to tetrahydrodipicolinate. The polypeptide is 4-hydroxy-tetrahydrodipicolinate reductase (Burkholderia mallei (strain NCTC 10247)).